Consider the following 122-residue polypeptide: Large ribosomal subunit protein uL14c (122 aa).

It belongs to the universal ribosomal protein uL14 family. In terms of assembly, part of the 50S ribosomal subunit.

It is found in the plastid. It localises to the chloroplast. Binds to 23S rRNA. In Carica papaya (Papaya), this protein is Large ribosomal subunit protein uL14c.